A 281-amino-acid chain; its full sequence is MNNLKVWLLMAALSAILVLIGGAIGGKSGALLFFLISLGMNLFSYYYSDKVAISMTRSRPVSEEEAPGLYDVVRRLTKRAGLPMPRLYITPSPQPNAFATGRNPAHSAVAVTEGLLRLLNQSELEGVLAHELAHIKNRDVLIGTIAAAFAGAITMISNIVQWGAFFGMGQDDEEGGGGSFIASLLLALIAPVAAMIIQLAISRSREYLADETGARMAGNSGGLANALLKLDSAARRIPMQVNPAASHLFIVNPLSGESIARLFSTHPPISERVKRLNAMAI.

The next 2 membrane-spanning stretches (helical) occupy residues 6-26 (VWLLMAALSAILVLIGGAIGG) and 28-48 (SGALLFFLISLGMNLFSYYYS). His-130 contacts Zn(2+). Glu-131 is a catalytic residue. Zn(2+) is bound at residue His-134. Helical transmembrane passes span 140-160 (VLIGTIAAAFAGAITMISNIV) and 181-201 (IASLLLALIAPVAAMIIQLAI). A Zn(2+)-binding site is contributed by Glu-206.

Belongs to the peptidase M48B family. It depends on Zn(2+) as a cofactor.

The protein localises to the cell membrane. In Pelotomaculum thermopropionicum (strain DSM 13744 / JCM 10971 / SI), this protein is Protease HtpX homolog.